Here is a 778-residue protein sequence, read N- to C-terminus: LPS-assembly protein LptD (778 aa).

Positions 1–23 are cleaved as a signal peptide; sequence MKTRYSVLSVAMTAAFYTQYAQA.

Belongs to the LptD family. As to quaternary structure, component of the lipopolysaccharide transport and assembly complex. Interacts with LptE and LptA.

It localises to the cell outer membrane. Together with LptE, is involved in the assembly of lipopolysaccharide (LPS) at the surface of the outer membrane. The polypeptide is LPS-assembly protein LptD (Actinobacillus pleuropneumoniae serotype 5b (strain L20)).